The primary structure comprises 263 residues: LOB domain-containing protein 41 (263 aa).

Residues 3-109 (MSCNGCRVLR…VEAVMKGEPV (107 aa)) enclose the LOB domain. Residues 162-204 (TVAIQAESEGKSDEASHDSSLSHQSEIVAAHEGESKESESNVS) form a disordered region. 2 stretches are compositionally biased toward basic and acidic residues: residues 169–178 (SEGKSDEASH) and 190–200 (AAHEGESKESE).

This sequence belongs to the LOB domain-containing protein family. In terms of tissue distribution, expressed in young shoots, roots, stems, leaves and flowers.

The protein is LOB domain-containing protein 41 (LBD41) of Arabidopsis thaliana (Mouse-ear cress).